The primary structure comprises 186 residues: Large ribosomal subunit protein uL5 (186 aa).

It belongs to the universal ribosomal protein uL5 family. Part of the 50S ribosomal subunit; part of the 5S rRNA/L5/L18/L25 subcomplex. Contacts the 5S rRNA and the P site tRNA. Forms a bridge to the 30S subunit in the 70S ribosome.

This is one of the proteins that bind and probably mediate the attachment of the 5S RNA into the large ribosomal subunit, where it forms part of the central protuberance. In the 70S ribosome it contacts protein S13 of the 30S subunit (bridge B1b), connecting the 2 subunits; this bridge is implicated in subunit movement. Contacts the P site tRNA; the 5S rRNA and some of its associated proteins might help stabilize positioning of ribosome-bound tRNAs. This chain is Large ribosomal subunit protein uL5, found in Cereibacter sphaeroides (strain ATCC 17023 / DSM 158 / JCM 6121 / CCUG 31486 / LMG 2827 / NBRC 12203 / NCIMB 8253 / ATH 2.4.1.) (Rhodobacter sphaeroides).